Here is a 173-residue protein sequence, read N- to C-terminus: NADH-ubiquinone oxidoreductase chain 6 (173 aa).

Transmembrane regions (helical) follow at residues 1–21 (MTYLVSLFLLGLVLGLVAVAS), 24–44 (APYFAALGLVVAAGVGCGVLV), 53–73 (LVLFLIYLGGMLVVFAYSAAL), 87–107 (VLGYVVVYTVGVVLVAGLFWG), and 141–161 (GGMLIACAWVLLLTLFVVLEL).

The protein belongs to the complex I subunit 6 family.

Its subcellular location is the mitochondrion membrane. The enzyme catalyses a ubiquinone + NADH + 5 H(+)(in) = a ubiquinol + NAD(+) + 4 H(+)(out). Its function is as follows. Core subunit of the mitochondrial membrane respiratory chain NADH dehydrogenase (Complex I) that is believed to belong to the minimal assembly required for catalysis. Complex I functions in the transfer of electrons from NADH to the respiratory chain. The immediate electron acceptor for the enzyme is believed to be ubiquinone. The polypeptide is NADH-ubiquinone oxidoreductase chain 6 (MT-ND6) (Oncorhynchus mykiss (Rainbow trout)).